The following is a 335-amino-acid chain: Phospho-N-acetylmuramoyl-pentapeptide-transferase (335 aa).

Transmembrane regions (helical) follow at residues 3–23 (LTIL…PHFI), 53–73 (GGTV…LVYF), 78–98 (SLGL…IGFL), 118–138 (FTLQ…PSGI), 143–163 (VFGY…FWVV), 174–194 (GIDG…GVIA), 200–220 (FDVL…FLFN), 226–246 (IFMG…ISIA), 251–271 (WTLL…MLQV), and 314–334 (VDAF…AILY).

Belongs to the glycosyltransferase 4 family. MraY subfamily. Requires Mg(2+) as cofactor.

The protein localises to the cell membrane. It carries out the reaction UDP-N-acetyl-alpha-D-muramoyl-L-alanyl-gamma-D-glutamyl-L-lysyl-D-alanyl-D-alanine + di-trans,octa-cis-undecaprenyl phosphate = Mur2Ac(oyl-L-Ala-gamma-D-Glu-L-Lys-D-Ala-D-Ala)-di-trans,octa-cis-undecaprenyl diphosphate + UMP. The protein operates within cell wall biogenesis; peptidoglycan biosynthesis. In terms of biological role, catalyzes the initial step of the lipid cycle reactions in the biosynthesis of the cell wall peptidoglycan: transfers peptidoglycan precursor phospho-MurNAc-pentapeptide from UDP-MurNAc-pentapeptide onto the lipid carrier undecaprenyl phosphate, yielding undecaprenyl-pyrophosphoryl-MurNAc-pentapeptide, known as lipid I. In Streptococcus equi subsp. zooepidemicus (strain MGCS10565), this protein is Phospho-N-acetylmuramoyl-pentapeptide-transferase.